A 476-amino-acid chain; its full sequence is Bifunctional protein HldE (476 aa).

Residues 1–318 form a ribokinase region; it reads MKPTLPNYDQ…AEAIHGSQDS (318 aa). ATP is bound at residue 195–198; sequence NMLE. The active site involves D264. Residues 344–476 are cytidylyltransferase; that stretch reads MTNGCFDILH…IIEAIKGGRG (133 aa).

It in the N-terminal section; belongs to the carbohydrate kinase PfkB family. The protein in the C-terminal section; belongs to the cytidylyltransferase family. As to quaternary structure, homodimer.

It catalyses the reaction D-glycero-beta-D-manno-heptose 7-phosphate + ATP = D-glycero-beta-D-manno-heptose 1,7-bisphosphate + ADP + H(+). The enzyme catalyses D-glycero-beta-D-manno-heptose 1-phosphate + ATP + H(+) = ADP-D-glycero-beta-D-manno-heptose + diphosphate. It functions in the pathway nucleotide-sugar biosynthesis; ADP-L-glycero-beta-D-manno-heptose biosynthesis; ADP-L-glycero-beta-D-manno-heptose from D-glycero-beta-D-manno-heptose 7-phosphate: step 1/4. It participates in nucleotide-sugar biosynthesis; ADP-L-glycero-beta-D-manno-heptose biosynthesis; ADP-L-glycero-beta-D-manno-heptose from D-glycero-beta-D-manno-heptose 7-phosphate: step 3/4. Its function is as follows. Catalyzes the phosphorylation of D-glycero-D-manno-heptose 7-phosphate at the C-1 position to selectively form D-glycero-beta-D-manno-heptose-1,7-bisphosphate. Catalyzes the ADP transfer from ATP to D-glycero-beta-D-manno-heptose 1-phosphate, yielding ADP-D-glycero-beta-D-manno-heptose. The protein is Bifunctional protein HldE of Aliivibrio salmonicida (strain LFI1238) (Vibrio salmonicida (strain LFI1238)).